The primary structure comprises 634 residues: tRNA uridine 5-carboxymethylaminomethyl modification enzyme MnmG (634 aa).

14 to 19 (GGGHAG) serves as a coordination point for FAD. 279-293 (GPRYCPSIEDKVVRF) contacts NAD(+).

Belongs to the MnmG family. In terms of assembly, homodimer. Heterotetramer of two MnmE and two MnmG subunits. The cofactor is FAD.

The protein resides in the cytoplasm. Functionally, NAD-binding protein involved in the addition of a carboxymethylaminomethyl (cmnm) group at the wobble position (U34) of certain tRNAs, forming tRNA-cmnm(5)s(2)U34. The chain is tRNA uridine 5-carboxymethylaminomethyl modification enzyme MnmG from Xanthomonas euvesicatoria pv. vesicatoria (strain 85-10) (Xanthomonas campestris pv. vesicatoria).